We begin with the raw amino-acid sequence, 297 residues long: UDP-N-acetylenolpyruvoylglucosamine reductase (297 aa).

The FAD-binding PCMH-type domain occupies 22–195 (RAGGTARYYA…LAGRFRLQRG (174 aa)). Residue Arg-169 is part of the active site. The active-site Proton donor is the Ser-223. Glu-293 is an active-site residue.

Belongs to the MurB family. It depends on FAD as a cofactor.

The protein resides in the cytoplasm. It carries out the reaction UDP-N-acetyl-alpha-D-muramate + NADP(+) = UDP-N-acetyl-3-O-(1-carboxyvinyl)-alpha-D-glucosamine + NADPH + H(+). It participates in cell wall biogenesis; peptidoglycan biosynthesis. In terms of biological role, cell wall formation. This Chloroflexus aurantiacus (strain ATCC 29364 / DSM 637 / Y-400-fl) protein is UDP-N-acetylenolpyruvoylglucosamine reductase.